Reading from the N-terminus, the 329-residue chain is GTPase Obg (329 aa).

Residues 2–160 (YNFKDSVSIT…LNVRLELFLV (159 aa)) form the Obg domain. Residues 161 to 327 (ADIGLVGPPN…LIKEFFILAK (167 aa)) form the OBG-type G domain. Residues 167–174 (GPPNAGKS), 192–196 (FTTKI), 213–216 (DIPG), 280–283 (NKLD), and 308–310 (SIY) each bind GTP. Mg(2+) contacts are provided by Ser174 and Thr194.

This sequence belongs to the TRAFAC class OBG-HflX-like GTPase superfamily. OBG GTPase family. As to quaternary structure, monomer. The cofactor is Mg(2+).

The protein localises to the cytoplasm. In terms of biological role, an essential GTPase which binds GTP, GDP and possibly (p)ppGpp with moderate affinity, with high nucleotide exchange rates and a fairly low GTP hydrolysis rate. Plays a role in control of the cell cycle, stress response, ribosome biogenesis and in those bacteria that undergo differentiation, in morphogenesis control. The chain is GTPase Obg from Borrelia garinii subsp. bavariensis (strain ATCC BAA-2496 / DSM 23469 / PBi) (Borreliella bavariensis).